A 727-amino-acid polypeptide reads, in one-letter code: Sodium-dependent neutral amino acid transporter SLC6A17 (727 aa).

The Cytoplasmic segment spans residues 1–69; the sequence is MPKNSKVTQR…RPAWNSKLQY (69 aa). 2 positions are modified to phosphoserine: Ser-13 and Ser-20. Residues 70–90 form a helical membrane-spanning segment; sequence ILAQIGFSVGLGNIWRFPYLC. Residues 91 to 95 lie on the Extracellular side of the membrane; the sequence is QKNGG. Residues 96–116 form a helical membrane-spanning segment; that stretch reads GAYLVPYLVLLIIIGIPLFFL. The Cytoplasmic segment spans residues 117–147; that stretch reads ELAVGQRIRRGSIGVWHYICPRLGGIGFSSC. Residues 148-168 traverse the membrane as a helical segment; that stretch reads IVCLFVGLYYNVIIGWSIFYF. Residues 169–222 are Extracellular-facing; it reads FKSFQYPLPWSECPVVRNGSVAVVEAECEKSSATTYFWYREALDISDSISESGG. Asn-186 is a glycosylation site (N-linked (GlcNAc...) asparagine). Residues 223–243 traverse the membrane as a helical segment; sequence LNWKMTLCLLVAWSIVGMAVV. Topologically, residues 244–253 are cytoplasmic; it reads KGIQSSGKVM. Residues 254–274 form a helical membrane-spanning segment; sequence YFSSLFPYVVLACFLVRGLLL. Residues 275-300 are Extracellular-facing; that stretch reads RGAVDGILHMFTPKLDKMLDPQVWRE. The helical transmembrane segment at 301-321 threads the bilayer; it reads AATQVFFALGLGFGGVIAFSS. The Cytoplasmic portion of the chain corresponds to 322–334; that stretch reads YNKQDNNCHFDAA. Residues 335 to 355 form a helical membrane-spanning segment; the sequence is LVSFINFFTSVLATLVVFAVL. Residues 356–460 are Extracellular-facing; it reads GFKANIMNEK…HFPASPFWSV (105 aa). Phosphotyrosine is present on Tyr-377. Asn-393 is a glycosylation site (N-linked (GlcNAc...) asparagine). The helical transmembrane segment at 461-481 threads the bilayer; that stretch reads MFFLMLINLGLGSMIGTMAGI. The Cytoplasmic segment spans residues 482-490; sequence TTPIIDTFK. Residues 491 to 511 traverse the membrane as a helical segment; the sequence is VPKEMFTVGCCVFAFLVGLLF. Residues 512–527 are Extracellular-facing; sequence VQRSGNYFVTMFDDYS. A helical membrane pass occupies residues 528–548; that stretch reads ATLPLTLIVILENIAVAWIYG. The Cytoplasmic segment spans residues 549 to 573; the sequence is TKKFMQELTEMLGFRPYRFYFYMWK. Residues 574–594 traverse the membrane as a helical segment; that stretch reads FVSPLCMAVLTTASIIQLGVT. At 595 to 617 the chain is on the extracellular side; the sequence is PPGYSAWIKEEAAERYLYFPNWA. A helical transmembrane segment spans residues 618–638; it reads MALLITLIVVATLPIPVVFVL. The Cytoplasmic segment spans residues 639–727; it reads RHFHLLSDGS…LLASTPESEL (89 aa). Ser-665 and Ser-701 each carry phosphoserine. A disordered region spans residues 680 to 727; it reads VPSEAPSPMPTHRSYLGPGSTSPLETSGNPNGRYGSGYLLASTPESEL. A compositionally biased stretch (polar residues) spans 698–709; that stretch reads GSTSPLETSGNP.

Belongs to the sodium:neurotransmitter symporter (SNF) (TC 2.A.22) family.

The protein resides in the cytoplasmic vesicle. The protein localises to the secretory vesicle. Its subcellular location is the synaptic vesicle membrane. It localises to the postsynapse. It is found in the presynapse. The enzyme catalyses L-proline(in) + Na(+)(in) = L-proline(out) + Na(+)(out). The catalysed reaction is L-leucine(in) + Na(+)(in) = L-leucine(out) + Na(+)(out). It carries out the reaction glycine(in) + Na(+)(in) = glycine(out) + Na(+)(out). It catalyses the reaction L-alanine(in) + Na(+)(in) = L-alanine(out) + Na(+)(out). The enzyme catalyses L-glutamine(in) + Na(+)(in) = L-glutamine(out) + Na(+)(out). In terms of biological role, synaptic vesicle transporter with apparent selectivity for neutral amino acids. The transport is sodium-coupled but chloride-independent, likely driven by the proton electrochemical gradient generated by vacuolar H(+)-ATPase in an overall electrogenic mechanism. May contribute to the synaptic uptake of neurotransmitter precursors in a process coupled in part to vesicle exocytosis. This Homo sapiens (Human) protein is Sodium-dependent neutral amino acid transporter SLC6A17.